Here is a 487-residue protein sequence, read N- to C-terminus: Acetylcholine receptor subunit beta-type acr-3 (487 aa).

The first 20 residues, 1-20 (MQKIWLFSIITIFLITELQC), serve as a signal peptide directing secretion. Topologically, residues 21 to 231 (YPNSAEERLL…KIRRKALFYT (211 aa)) are extracellular. N46 carries N-linked (GlcNAc...) asparagine glycosylation. Cysteines 151 and 165 form a disulfide. 3 helical membrane passes run 232-252 (VILI…FYLP), 259-279 (ITLA…VSKI), and 294-314 (LLMT…IINV). Over 315-439 (YFRGPATHIM…WKFVSVVIDR (125 aa)) the chain is Cytoplasmic. The interval 380–400 (ISEQPKQTSRKDGSSSEEKLS) is disordered. The chain crosses the membrane as a helical span at residues 440–460 (LLLYLFFAVTTGGTVGILLSA).

This sequence belongs to the ligand-gated ion channel (TC 1.A.9) family. Acetylcholine receptor (TC 1.A.9.1) subfamily. As to quaternary structure, component of nicotinic acetylcholine receptor. In cholinergic motoneurons, composed of 2 non-alpha subunits acr-2 and acr-3, and 3 alpha subunits unc-38, unc-63 and acr-12.

Its subcellular location is the postsynaptic cell membrane. It localises to the cell membrane. Its function is as follows. Non-alpha subunit of nicotinic acetylcholine receptor (nAChR). Probably acts in cholinergic motoneurons to regulate presynaptic neurotransmitter release, thereby ensuring normal level of excitation of cholinergic motoneurons during locomotion. The chain is Acetylcholine receptor subunit beta-type acr-3 (acr-3) from Caenorhabditis elegans.